The sequence spans 258 residues: Thiazole synthase (258 aa).

Residue Lys97 is the Schiff-base intermediate with DXP of the active site. 1-deoxy-D-xylulose 5-phosphate-binding positions include Gly158, 184–185 (AG), and 206–207 (NT).

This sequence belongs to the ThiG family. Homotetramer. Forms heterodimers with either ThiH or ThiS.

It is found in the cytoplasm. The enzyme catalyses [ThiS sulfur-carrier protein]-C-terminal-Gly-aminoethanethioate + 2-iminoacetate + 1-deoxy-D-xylulose 5-phosphate = [ThiS sulfur-carrier protein]-C-terminal Gly-Gly + 2-[(2R,5Z)-2-carboxy-4-methylthiazol-5(2H)-ylidene]ethyl phosphate + 2 H2O + H(+). It functions in the pathway cofactor biosynthesis; thiamine diphosphate biosynthesis. Catalyzes the rearrangement of 1-deoxy-D-xylulose 5-phosphate (DXP) to produce the thiazole phosphate moiety of thiamine. Sulfur is provided by the thiocarboxylate moiety of the carrier protein ThiS. In vitro, sulfur can be provided by H(2)S. This is Thiazole synthase from Bacteroides fragilis (strain ATCC 25285 / DSM 2151 / CCUG 4856 / JCM 11019 / LMG 10263 / NCTC 9343 / Onslow / VPI 2553 / EN-2).